The chain runs to 173 residues: 3-hydroxydecanoyl-[acyl-carrier-protein] dehydratase (173 aa).

H71 is a catalytic residue.

This sequence belongs to the thioester dehydratase family. FabA subfamily. As to quaternary structure, homodimer.

It localises to the cytoplasm. It catalyses the reaction a (3R)-hydroxyacyl-[ACP] = a (2E)-enoyl-[ACP] + H2O. The enzyme catalyses (3R)-hydroxydecanoyl-[ACP] = (2E)-decenoyl-[ACP] + H2O. The catalysed reaction is (2E)-decenoyl-[ACP] = (3Z)-decenoyl-[ACP]. The protein operates within lipid metabolism; fatty acid biosynthesis. Functionally, necessary for the introduction of cis unsaturation into fatty acids. Catalyzes the dehydration of (3R)-3-hydroxydecanoyl-ACP to E-(2)-decenoyl-ACP and then its isomerization to Z-(3)-decenoyl-ACP. Can catalyze the dehydratase reaction for beta-hydroxyacyl-ACPs with saturated chain lengths up to 16:0, being most active on intermediate chain length. This Bradyrhizobium diazoefficiens (strain JCM 10833 / BCRC 13528 / IAM 13628 / NBRC 14792 / USDA 110) protein is 3-hydroxydecanoyl-[acyl-carrier-protein] dehydratase.